We begin with the raw amino-acid sequence, 157 residues long: MSGLQKQEALVQEFKDLLKQEQFGSQGEIVDALKANGFDNISQSKISRMLSKFGAVRTRNARQEMVYCLPAELGVPTAQSPLKQLVLEIEHNEVMIIIQTSPGAAQLIARLLDSLSKSDGVLGTIAGDDTIFIAPSDVSKINETIKKLEQLFSKNLT.

This sequence belongs to the ArgR family.

The protein localises to the cytoplasm. Its pathway is amino-acid biosynthesis; L-arginine biosynthesis [regulation]. In terms of biological role, regulates arginine biosynthesis genes. The sequence is that of Arginine repressor from Colwellia psychrerythraea (strain 34H / ATCC BAA-681) (Vibrio psychroerythus).